A 461-amino-acid polypeptide reads, in one-letter code: MANASPLSPTNQHFFQPLLPGFQSNLKIPVNYFSEHIEGKHEGKTVTLRTDASERTWEVKMEGHRLTEGWKEFVEAHDLRIGDFVVFRHEGDMVFHVTALGPSCCEIQYPQSSRHEEGEESGENEISEKEGEENVQKESDKSSSDLNCFSQSVTHSNISRDAVSVPRDFVKRSGFSKGRHEIVLMNEEGKSWESEVKSYMSGAVYLVGGWTTFCTENKLDVGDSCTFKLLQKAKTPVFQLCSRTKHLPLSFTKVNGLINPGKIILVDKDRAEWSMMLKVDSRGAVYIIGGNDWKSFCAANEVGAGESLALELIQGGVLLNQITTCFQMEQPSFKAEDGRHKRARVQNRSQETDKGAETSRASTMGPKLEITEKGEPSRASTMRPKVEIREKIAETGEPSRASNKSSGIEGNLQHTKPCSVKTDQLAKVKESVVDTLTSIGRFQAELETMKRKLEDSLQELN.

The segment at residues 11-103 (NQHFFQPLLP…VFHVTALGPS (93 aa)) is a DNA-binding region (TF-B3 1). The segment at 110 to 146 (PQSSRHEEGEESGENEISEKEGEENVQKESDKSSSDL) is disordered. Residues 126–143 (ISEKEGEENVQKESDKSS) show a composition bias toward basic and acidic residues. 2 DNA-binding regions (TF-B3) span residues 148–244 (CFSQ…CSRT) and 230–332 (LQKA…EQPS). Residues 333–415 (FKAEDGRHKR…SGIEGNLQHT (83 aa)) form a disordered region. A compositionally biased stretch (basic and acidic residues) spans 384-394 (PKVEIREKIAE). The span at 400–415 (RASNKSSGIEGNLQHT) shows a compositional bias: polar residues.

It is found in the nucleus. The polypeptide is B3 domain-containing protein REM9 (REM9) (Arabidopsis thaliana (Mouse-ear cress)).